Consider the following 749-residue polypeptide: Myosin-binding protein 2 (749 aa).

Residues 17–37 (ITLILVYAFLEWSLIFFILLN) traverse the membrane as a helical segment. The segment at 164-184 (NLNDSQEETEEKKVPQSHEKL) is disordered. Residues 173 to 184 (EEKKVPQSHEKL) show a composition bias toward basic and acidic residues. Residues 411-509 (LTVDKLKFEL…ELEKELEVYR (99 aa)) enclose the GTD-binding domain. The stretch at 589-621 (ERLSILGRLKFLEEKLTDLNNEEDDEEEAKTFE) forms a coiled coil. Positions 608-640 (NNEEDDEEEAKTFESNGSINGNEHIHGKETNGK) are disordered. The segment covering 630-639 (EHIHGKETNG) has biased composition (basic and acidic residues). A coiled-coil region spans residues 676-710 (DSEKGENVTIEEEVDELYERLEALEADREFLRHCV).

Interacts with myosin XI-K and XI-1. Expressed in leaf epidermal cells, roots and root hairs.

It localises to the endomembrane system. Functionally, membrane-anchored myosin receptors that define a distinct, plant-specific transport vesicle compartment. The protein is Myosin-binding protein 2 of Arabidopsis thaliana (Mouse-ear cress).